Consider the following 268-residue polypeptide: Tryptophan synthase alpha chain (268 aa).

Residues Glu49 and Asp60 each act as proton acceptor in the active site.

It belongs to the TrpA family. In terms of assembly, tetramer of two alpha and two beta chains.

The catalysed reaction is (1S,2R)-1-C-(indol-3-yl)glycerol 3-phosphate + L-serine = D-glyceraldehyde 3-phosphate + L-tryptophan + H2O. It participates in amino-acid biosynthesis; L-tryptophan biosynthesis; L-tryptophan from chorismate: step 5/5. Its function is as follows. The alpha subunit is responsible for the aldol cleavage of indoleglycerol phosphate to indole and glyceraldehyde 3-phosphate. The chain is Tryptophan synthase alpha chain from Pseudomonas aeruginosa (strain UCBPP-PA14).